The primary structure comprises 899 residues: Bifunctional uridylyltransferase/uridylyl-removing enzyme (899 aa).

The interval 1–347 (MFISDPTDSL…PESERPEKSV (347 aa)) is uridylyltransferase. The tract at residues 348–718 (LNARFNRVGD…EHRELALDAV (371 aa)) is uridylyl-removing. The region spanning 465–581 (VDAHILLLIR…TKFANLVGNV (117 aa)) is the HD domain. ACT domains lie at 719-804 (QIFI…RLPR) and 827-899 (VMSL…TPSC).

It belongs to the GlnD family. The cofactor is Mg(2+).

The catalysed reaction is [protein-PII]-L-tyrosine + UTP = [protein-PII]-uridylyl-L-tyrosine + diphosphate. It carries out the reaction [protein-PII]-uridylyl-L-tyrosine + H2O = [protein-PII]-L-tyrosine + UMP + H(+). With respect to regulation, uridylyltransferase (UTase) activity is inhibited by glutamine, while glutamine activates uridylyl-removing (UR) activity. In terms of biological role, modifies, by uridylylation and deuridylylation, the PII regulatory proteins (GlnB and homologs), in response to the nitrogen status of the cell that GlnD senses through the glutamine level. Under low glutamine levels, catalyzes the conversion of the PII proteins and UTP to PII-UMP and PPi, while under higher glutamine levels, GlnD hydrolyzes PII-UMP to PII and UMP (deuridylylation). Thus, controls uridylylation state and activity of the PII proteins, and plays an important role in the regulation of nitrogen assimilation and metabolism. This Psychrobacter sp. (strain PRwf-1) protein is Bifunctional uridylyltransferase/uridylyl-removing enzyme.